The chain runs to 133 residues: ATP synthase epsilon chain, chloroplastic (133 aa).

It belongs to the ATPase epsilon chain family. As to quaternary structure, F-type ATPases have 2 components, CF(1) - the catalytic core - and CF(0) - the membrane proton channel. CF(1) has five subunits: alpha(3), beta(3), gamma(1), delta(1), epsilon(1). CF(0) has three main subunits: a, b and c.

It localises to the plastid. It is found in the chloroplast thylakoid membrane. In terms of biological role, produces ATP from ADP in the presence of a proton gradient across the membrane. This Eucalyptus globulus subsp. globulus (Tasmanian blue gum) protein is ATP synthase epsilon chain, chloroplastic.